We begin with the raw amino-acid sequence, 392 residues long: Formate-dependent phosphoribosylglycinamide formyltransferase (392 aa).

Residues 22 to 23 and E82 contribute to the N(1)-(5-phospho-beta-D-ribosyl)glycinamide site; that span reads EL. Residues R114, K155, 160–165, 195–198, and E203 contribute to the ATP site; these read SSGKGQ and EGVV. The ATP-grasp domain maps to 119–308; that stretch reads RLAAEELGLP…EFALHVRAFL (190 aa). Mg(2+) contacts are provided by E267 and E279. Residues D286, K355, and 362–363 contribute to the N(1)-(5-phospho-beta-D-ribosyl)glycinamide site; that span reads RR.

Belongs to the PurK/PurT family. As to quaternary structure, homodimer.

The catalysed reaction is N(1)-(5-phospho-beta-D-ribosyl)glycinamide + formate + ATP = N(2)-formyl-N(1)-(5-phospho-beta-D-ribosyl)glycinamide + ADP + phosphate + H(+). Its pathway is purine metabolism; IMP biosynthesis via de novo pathway; N(2)-formyl-N(1)-(5-phospho-D-ribosyl)glycinamide from N(1)-(5-phospho-D-ribosyl)glycinamide (formate route): step 1/1. In terms of biological role, involved in the de novo purine biosynthesis. Catalyzes the transfer of formate to 5-phospho-ribosyl-glycinamide (GAR), producing 5-phospho-ribosyl-N-formylglycinamide (FGAR). Formate is provided by PurU via hydrolysis of 10-formyl-tetrahydrofolate. The polypeptide is Formate-dependent phosphoribosylglycinamide formyltransferase (Salmonella paratyphi B (strain ATCC BAA-1250 / SPB7)).